A 163-amino-acid chain; its full sequence is ATP synthase subunit b 1 (163 aa).

Residues 5 to 25 (FDATFFAFVGLVLFLALVVYL) traverse the membrane as a helical segment.

This sequence belongs to the ATPase B chain family. F-type ATPases have 2 components, F(1) - the catalytic core - and F(0) - the membrane proton channel. F(1) has five subunits: alpha(3), beta(3), gamma(1), delta(1), epsilon(1). F(0) has three main subunits: a(1), b(2) and c(10-14). The alpha and beta chains form an alternating ring which encloses part of the gamma chain. F(1) is attached to F(0) by a central stalk formed by the gamma and epsilon chains, while a peripheral stalk is formed by the delta and b chains.

Its subcellular location is the cell inner membrane. In terms of biological role, f(1)F(0) ATP synthase produces ATP from ADP in the presence of a proton or sodium gradient. F-type ATPases consist of two structural domains, F(1) containing the extramembraneous catalytic core and F(0) containing the membrane proton channel, linked together by a central stalk and a peripheral stalk. During catalysis, ATP synthesis in the catalytic domain of F(1) is coupled via a rotary mechanism of the central stalk subunits to proton translocation. Component of the F(0) channel, it forms part of the peripheral stalk, linking F(1) to F(0). The chain is ATP synthase subunit b 1 from Rhizobium leguminosarum bv. trifolii (strain WSM2304).